The following is a 226-amino-acid chain: PKHD-type hydroxylase Pput_0892 (226 aa).

The Fe2OG dioxygenase domain maps to 78 to 178 (KVFPPLINCY…RYAAFFWTQS (101 aa)). Residues histidine 96, aspartate 98, and histidine 159 each coordinate Fe cation. Arginine 169 lines the 2-oxoglutarate pocket.

Fe(2+) is required as a cofactor. L-ascorbate serves as cofactor.

The polypeptide is PKHD-type hydroxylase Pput_0892 (Pseudomonas putida (strain ATCC 700007 / DSM 6899 / JCM 31910 / BCRC 17059 / LMG 24140 / F1)).